The chain runs to 70 residues: DNA-directed RNA polymerase subunit omega (70 aa).

It belongs to the RNA polymerase subunit omega family. As to quaternary structure, the RNAP catalytic core consists of 2 alpha, 1 beta, 1 beta' and 1 omega subunit. When a sigma factor is associated with the core the holoenzyme is formed, which can initiate transcription.

The catalysed reaction is RNA(n) + a ribonucleoside 5'-triphosphate = RNA(n+1) + diphosphate. Functionally, promotes RNA polymerase assembly. Latches the N- and C-terminal regions of the beta' subunit thereby facilitating its interaction with the beta and alpha subunits. The chain is DNA-directed RNA polymerase subunit omega from Thermoanaerobacter pseudethanolicus (strain ATCC 33223 / 39E) (Clostridium thermohydrosulfuricum).